The chain runs to 657 residues: Pentatricopeptide repeat-containing protein CRR2, chloroplastic (657 aa).

Residues 1–51 (MFLSHPPQVIQPTYHTVNFLPRSPLKPPSCSVALNNPSISSGAGAKISNNQ) constitute a chloroplast transit peptide. PPR repeat units lie at residues 45 to 75 (AKIS…ESSP), 76 to 110 (SQQT…GSDQ), 111 to 141 (DPFL…TRKR), 142 to 176 (TIYV…GVES), 177 to 215 (DRFT…GYSS), 216 to 246 (HVYI…MPVR), 247 to 277 (NVVS…MMRE), 284 to 318 (NSVT…GLDS), 319 to 349 (ILPV…MHDR), 350 to 384 (DVVS…GASP), 385 to 420 (TPVT…GIKP), and 421 to 451 (QIEH…MRTE). Residues 456–531 (VWGSLLGSCR…LPGRCWMEVR (76 aa)) are type E motif. A type E(+) motif region spans residues 532 to 562 (RKMYSFVSVDEFNPLMEQIHAFLVKLAEDMK). Positions 563-657 (EKGYIPQTKG…NGVCSCGDYW (95 aa)) are type DYW motif.

It belongs to the PPR family. PCMP-H subfamily.

The protein localises to the plastid. Its subcellular location is the chloroplast. Functionally, required for the intergenic processing between chloroplast rsp7 and ndhB transcripts. Necessary for chloroplast NADH dehydrogenase-like (NDH) complex-dependent cyclic electron transport around PSI (CET). This is Pentatricopeptide repeat-containing protein CRR2, chloroplastic from Arabidopsis thaliana (Mouse-ear cress).